We begin with the raw amino-acid sequence, 64 residues long: Prokaryotic ubiquitin-like protein UBact (64 aa).

Residues Met-1–Glu-64 are disordered. Residues Arg-22–Glu-64 are compositionally biased toward basic and acidic residues. Glu-64 participates in a covalent cross-link: Isoglutamyl lysine isopeptide (Glu-Lys) (interchain with K-? in acceptor proteins).

Belongs to the ubiquitin-like protein UBact family.

Its function is as follows. May function as a protein modifier covalently attached to lysine residues of substrate proteins. This may serve to target the modified proteins for degradation by proteasomes. This Leptospirillum ferriphilum (strain ML-04) protein is Prokaryotic ubiquitin-like protein UBact.